A 141-amino-acid polypeptide reads, in one-letter code: Hemoglobin subunit alpha (141 aa).

The 141-residue stretch at 1 to 141 folds into the Globin domain; the sequence is VLSSADKNNV…VSTVLTSKYR (141 aa). At serine 3 the chain carries Phosphoserine. Residues lysine 7 and lysine 11 each carry the N6-succinyllysine modification. The residue at position 16 (lysine 16) is an N6-acetyllysine; alternate. Lysine 16 carries the post-translational modification N6-succinyllysine; alternate. Tyrosine 24 carries the post-translational modification Phosphotyrosine. Position 35 is a phosphoserine (serine 35). Residue lysine 40 is modified to N6-succinyllysine. Serine 49 carries the post-translational modification Phosphoserine. Position 58 (histidine 58) interacts with O2. Residue histidine 87 coordinates heme b. Position 102 is a phosphoserine (serine 102). Threonine 108 carries the post-translational modification Phosphothreonine. Serine 124 carries the post-translational modification Phosphoserine. A phosphothreonine mark is found at threonine 134 and threonine 137. Serine 138 is modified (phosphoserine).

The protein belongs to the globin family. As to quaternary structure, heterotetramer of two alpha chains and two beta chains. In terms of tissue distribution, red blood cells.

Involved in oxygen transport from the lung to the various peripheral tissues. In terms of biological role, hemopressin acts as an antagonist peptide of the cannabinoid receptor CNR1. Hemopressin-binding efficiently blocks cannabinoid receptor CNR1 and subsequent signaling. In Panthera tigris sumatrae (Sumatran tiger), this protein is Hemoglobin subunit alpha (HBA).